The chain runs to 130 residues: Small ribosomal subunit protein uS8 (130 aa).

Belongs to the universal ribosomal protein uS8 family. Part of the 30S ribosomal subunit. Contacts proteins S5 and S12.

In terms of biological role, one of the primary rRNA binding proteins, it binds directly to 16S rRNA central domain where it helps coordinate assembly of the platform of the 30S subunit. The sequence is that of Small ribosomal subunit protein uS8 from Phytoplasma mali (strain AT).